Reading from the N-terminus, the 206-residue chain is Protease (206 aa).

Residues His54, Asp71, and Cys122 contribute to the active site.

Belongs to the peptidase C5 family. As to quaternary structure, interacts with protease cofactor pVI-C; this interaction is necessary for protease activation.

It localises to the virion. Its subcellular location is the host nucleus. The enzyme catalyses Cleaves proteins of the adenovirus and its host cell at two consensus sites: -Yaa-Xaa-Gly-Gly-|-Xaa- and -Yaa-Xaa-Gly-Xaa-|-Gly- (in which Yaa is Met, Ile or Leu, and Xaa is any amino acid).. Requires DNA and protease cofactor for maximal activation. Inside nascent virions, becomes partially activated by binding to the viral DNA, allowing it to cleave the cofactor that binds to the protease and fully activates it. Actin, like the viral protease cofactor, seems to act as a cofactor in the cleavage of cytokeratin 18 and of actin itself. Its function is as follows. Cleaves viral precursor proteins (pTP, pIIIa, pVI, pVII, pVIII, and pX) inside newly assembled particles giving rise to mature virions. Protease complexed to its cofactor slides along the viral DNA to specifically locate and cleave the viral precursors. Mature virions have a weakened organization compared to the unmature virions, thereby facilitating subsequent uncoating. Without maturation, the particle lacks infectivity and is unable to uncoat. Late in adenovirus infection, in the cytoplasm, may participate in the cytoskeleton destruction. Cleaves host cell cytoskeletal keratins K7 and K18. The protein is Protease of Homo sapiens (Human).